Consider the following 1349-residue polypeptide: Serine-aspartate repeat-containing protein D (1349 aa).

The signal sequence occupies residues 1–35; the sequence is MLNRENKTAITRKGMVSNRLNKFSIRKYTVGTASI. The short motif at 23 to 34 is the YSIRK-G/S signaling motif element; it reads FSIRKYTVGTAS. The ligand binding A region stretch occupies residues 36-568; that stretch reads LVGTTLIFGL…NNQSGGAGQE (533 aa). A disordered region spans residues 54–185; the sequence is ESTNKELNEA…NKKVDAKTES (132 aa). Composition is skewed to polar residues over residues 62 to 71 and 94 to 108; these read EATTSASDNQ and EMVSSQGNETTSNGN. Residues 130 to 145 are compositionally biased toward basic and acidic residues; that stretch reads KSDEQASPKSTNEDLN. Composition is skewed to polar residues over residues 146–155 and 163–173; these read TKQTISNQEA and NKSVVNVQPTN. A compositionally biased stretch (basic and acidic residues) spans 174-183; the sequence is EENKKVDAKT. 5 CNA-B domains span residues 569–680, 681–791, 792–901, 902–1012, and 1013–1123; these read VYKI…IYKP, KYNL…YKTP, KYNL…FYKP, TYNL…YKTP, and KYSL…EEDT. 3 disordered regions span residues 856 to 883, 972 to 992, and 1081 to 1325; these read FETPSGYTPTQVGSGTDEGIDSNGTSTT, YTPTSVTSGNDTEKDSNGLTT, and AGLT…SNNA. Composition is skewed to polar residues over residues 860-869 and 972-981; these read SGYTPTQVGS and YTPTSVTSGN. Acidic residues-rich tracts occupy residues 1091 to 1101 and 1118 to 1288; these read TEDDKDADGGE and YFEE…DSDS. The short motif at 1312-1316 is the LPXTG sorting signal element; the sequence is LPETG. Thr1315 carries the post-translational modification Pentaglycyl murein peptidoglycan amidated threonine. Residues 1316–1349 constitute a propeptide, removed by sortase; it reads GSENNGSNNATLFGGLFAALGSLLLFGRRKKQNK.

It belongs to the serine-aspartate repeat-containing protein (SDr) family. In terms of assembly, interacts with host DSG1; this interaction increases S.aureus adherence to keratinocytes.

It is found in the secreted. Its subcellular location is the cell wall. Functionally, cell surface-associated calcium-binding protein which plays an important role in adhesion and pathogenesis. Mediates interactions with components of the extracellular matrix such as host DSG1 to promote bacterial adhesion to host cells. Contributes to the resistance to killing by innate immune components such as neutrophils present in blood and thus attenuates bacterial clearance. The chain is Serine-aspartate repeat-containing protein D (sdrD) from Staphylococcus aureus (strain NCTC 8325 / PS 47).